Reading from the N-terminus, the 312-residue chain is Ribosomal protein L11 methyltransferase (312 aa).

Residues Thr163, Gly184, Asp206, and Asn248 each contribute to the S-adenosyl-L-methionine site.

Belongs to the methyltransferase superfamily. PrmA family.

Its subcellular location is the cytoplasm. The catalysed reaction is L-lysyl-[protein] + 3 S-adenosyl-L-methionine = N(6),N(6),N(6)-trimethyl-L-lysyl-[protein] + 3 S-adenosyl-L-homocysteine + 3 H(+). Its function is as follows. Methylates ribosomal protein L11. The polypeptide is Ribosomal protein L11 methyltransferase (Clostridium botulinum (strain Loch Maree / Type A3)).